The chain runs to 461 residues: Vitamin K-dependent protein C (461 aa).

An N-terminal signal peptide occupies residues 1–18; it reads MWQLTSLLLFVATWGISG. Thr-19 carries an O-linked (GalNAc...) threonine glycan. Residues 19–42 constitute a propeptide that is removed on maturation; the sequence is TPAPLDSVFSSSERAHQVLRIRKR. One can recognise a Gla domain in the interval 43–88; that stretch reads ANSFLEELRHSSLERECIEEICDFEEAKEIFQNVDDTLAFWSKHVD. Residues Glu-48, Glu-49, Glu-56, Glu-58, Glu-61, Glu-62, Glu-67, Glu-68, and Glu-71 each carry the 4-carboxyglutamate modification. The cysteines at positions 59 and 64 are disulfide-linked. Cystine bridges form between Cys-92–Cys-111, Cys-101–Cys-106, Cys-105–Cys-120, and Cys-122–Cys-131. EGF-like domains are found at residues 97–132 and 136–176; these read LEHP…RFCQ and SFLN…LQCH. Position 113 is a (3R)-3-hydroxyaspartate (Asp-113). The N-linked (GlcNAc...) asparagine glycan is linked to Asn-139. Intrachain disulfides connect Cys-140–Cys-151, Cys-147–Cys-160, Cys-162–Cys-175, Cys-183–Cys-319, and Cys-238–Cys-254. Residues 212–450 form the Peptidase S1 domain; that stretch reads LIDGKMTRRG…YLDWIHGHIR (239 aa). His-253 serves as the catalytic Charge relay system. N-linked (GlcNAc...) asparagine glycosylation occurs at Asn-290. Asp-299 (charge relay system) is an active-site residue. Phosphoserine; by FAM20C is present on Ser-347. N-linked (GlcNAc...) asparagine glycosylation is present at Asn-355. N-linked (GlcNAc...) asparagine; atypical; partial glycosylation occurs at Asn-371. 2 cysteine pairs are disulfide-bonded: Cys-373–Cys-387 and Cys-398–Cys-426. The Charge relay system role is filled by Ser-402.

Belongs to the peptidase S1 family. As to quaternary structure, synthesized as a single chain precursor, which is cleaved into a light chain and a heavy chain held together by a disulfide bond. The enzyme is then activated by thrombin, which cleaves a tetradecapeptide from the amino end of the heavy chain; this reaction, which occurs at the surface of endothelial cells, is strongly promoted by thrombomodulin. Interacts (activated) with iripin-8, a serine protease inhibitor from Ixodes ricinus saliva. The vitamin K-dependent, enzymatic carboxylation of some Glu residues allows the modified protein to bind calcium. Post-translationally, N- and O-glycosylated. Partial (70%) N-glycosylation of Asn-371 with an atypical N-X-C site produces a higher molecular weight form referred to as alpha. The lower molecular weight form, not N-glycosylated at Asn-371, is beta. O-glycosylated with core 1 or possibly core 8 glycans. In terms of processing, the iron and 2-oxoglutarate dependent 3-hydroxylation of aspartate and asparagine is (R) stereospecific within EGF domains. May be phosphorylated on a Ser or Thr in a region (AA 25-30) of the propeptide. Plasma; synthesized in the liver.

It is found in the secreted. It localises to the golgi apparatus. The protein resides in the endoplasmic reticulum. It catalyses the reaction Degradation of blood coagulation factors Va and VIIIa.. In terms of biological role, protein C is a vitamin K-dependent serine protease that regulates blood coagulation by inactivating factors Va and VIIIa in the presence of calcium ions and phospholipids. Exerts a protective effect on the endothelial cell barrier function. The protein is Vitamin K-dependent protein C (PROC) of Homo sapiens (Human).